Consider the following 877-residue polypeptide: Alanine--tRNA ligase (877 aa).

The Zn(2+) site is built by His-565, His-569, Cys-667, and His-671.

This sequence belongs to the class-II aminoacyl-tRNA synthetase family. The cofactor is Zn(2+).

The protein resides in the cytoplasm. The catalysed reaction is tRNA(Ala) + L-alanine + ATP = L-alanyl-tRNA(Ala) + AMP + diphosphate. Catalyzes the attachment of alanine to tRNA(Ala) in a two-step reaction: alanine is first activated by ATP to form Ala-AMP and then transferred to the acceptor end of tRNA(Ala). Also edits incorrectly charged Ser-tRNA(Ala) and Gly-tRNA(Ala) via its editing domain. This chain is Alanine--tRNA ligase, found in Chromobacterium violaceum (strain ATCC 12472 / DSM 30191 / JCM 1249 / CCUG 213 / NBRC 12614 / NCIMB 9131 / NCTC 9757 / MK).